A 323-amino-acid chain; its full sequence is Protoheme IX farnesyltransferase (323 aa).

A run of 8 helical transmembrane segments spans residues 28–48 (IIPL…EGRV), 50–70 (LFTL…AQVM), 101–121 (FIFA…FVNL), 122–142 (LSGL…THLL), 150–170 (IVIG…AVTG), 178–198 (ILFA…ALMI), 235–255 (FLLV…AIIL), and 282–302 (FSIF…LPLT).

This sequence belongs to the UbiA prenyltransferase family. Protoheme IX farnesyltransferase subfamily.

Its subcellular location is the cell inner membrane. The enzyme catalyses heme b + (2E,6E)-farnesyl diphosphate + H2O = Fe(II)-heme o + diphosphate. It functions in the pathway porphyrin-containing compound metabolism; heme O biosynthesis; heme O from protoheme: step 1/1. In terms of biological role, converts heme B (protoheme IX) to heme O by substitution of the vinyl group on carbon 2 of heme B porphyrin ring with a hydroxyethyl farnesyl side group. This is Protoheme IX farnesyltransferase from Rippkaea orientalis (strain PCC 8801 / RF-1) (Cyanothece sp. (strain PCC 8801)).